We begin with the raw amino-acid sequence, 214 residues long: Octanoyltransferase (214 aa).

In terms of domain architecture, BPL/LPL catalytic spans serine 29–serine 214. Residues arginine 69–histidine 76, alanine 146–glycine 148, and glycine 159–alanine 161 each bind substrate. Cysteine 177 (acyl-thioester intermediate) is an active-site residue.

It belongs to the LipB family.

It is found in the cytoplasm. The enzyme catalyses octanoyl-[ACP] + L-lysyl-[protein] = N(6)-octanoyl-L-lysyl-[protein] + holo-[ACP] + H(+). Its pathway is protein modification; protein lipoylation via endogenous pathway; protein N(6)-(lipoyl)lysine from octanoyl-[acyl-carrier-protein]: step 1/2. Its function is as follows. Catalyzes the transfer of endogenously produced octanoic acid from octanoyl-acyl-carrier-protein onto the lipoyl domains of lipoate-dependent enzymes. Lipoyl-ACP can also act as a substrate although octanoyl-ACP is likely to be the physiological substrate. The sequence is that of Octanoyltransferase from Polynucleobacter necessarius subsp. necessarius (strain STIR1).